The primary structure comprises 218 residues: Oxidative stress regulator AosR (218 aa).

The CXXXC motif lies at C5–C9. C5 and C9 form a disulfide bridge.

Belongs to the AosR family. In terms of assembly, homodimer. Under oxidative stress, interacts with the extracytoplasmic-function (ECF) RNA polymerase sigma factor SigH.

With respect to regulation, activity is modulated by the formation of a disulfide bound within the N-terminal Cys-X-X-X-Cys (CXXXC) motif. This intramolecular disulfide bond is formed in response to oxidative stress, and results in oxidative stress-dependent interaction with the sigma factor SigH. Transcription factor crucial for intra-mycobacterial redox homeostasis and protection against host-derived oxidative and nitrosative radicals. In response to oxidative stress, interacts with the ECF sigma factor SigH and, in conjunction with SigH, binds to an auxiliary promoter upstream of mec-cysO-cysM, leading to the transcriptional activation of these genes encoding a non-canonical actinomycete-specific cysteine biosynthesis pathway. Increased transcription of mec-cysO-cysM results in enhanced production of L-cysteine and cysteine-derived antioxidant molecules. Increased production of cysteine protects mycobacteria cells from host phagocyte-derived oxidative and nitrosative stress, thus facilitating the mycobacterial growth in the host. This chain is Oxidative stress regulator AosR, found in Mycobacterium bovis (strain ATCC BAA-935 / AF2122/97).